The primary structure comprises 191 residues: Amelogenin, X isoform (191 aa).

The N-terminal stretch at 1 to 16 (MGTWILFACLLGAAFA) is a signal peptide. Phosphoserine is present on serine 32. The span at 95-117 (IPQQPMMPVPGQHSMTPIQHHQP) shows a compositional bias: low complexity. The disordered stretch occupies residues 95–191 (IPQQPMMPVP…TDKTKREEVD (97 aa)). The segment covering 118–171 (NLPPPAQQPYQPQPVQPQPHQPMQPQPPVHPMQPLPPQPPLPPMFPMQPLPPML) has biased composition (pro residues).

It belongs to the amelogenin family. In terms of assembly, interacts with KRT5. Phosphorylated by FAM20C in vitro.

It localises to the secreted. The protein resides in the extracellular space. The protein localises to the extracellular matrix. In terms of biological role, plays a role in biomineralization. Seems to regulate the formation of crystallites during the secretory stage of tooth enamel development. Thought to play a major role in the structural organization and mineralization of developing enamel. This Homo sapiens (Human) protein is Amelogenin, X isoform (AMELX).